The sequence spans 39 residues: Large ribosomal subunit protein bL12 (39 aa).

It belongs to the bacterial ribosomal protein bL12 family. Homodimer. Part of the ribosomal stalk of the 50S ribosomal subunit. Forms a multimeric L10(L12)X complex, where L10 forms an elongated spine to which 2 to 4 L12 dimers bind in a sequential fashion. Binds GTP-bound translation factors.

Functionally, forms part of the ribosomal stalk which helps the ribosome interact with GTP-bound translation factors. Is thus essential for accurate translation. This is Large ribosomal subunit protein bL12 (rplL) from Arthrobacter glacialis.